The following is a 217-amino-acid chain: Thiosulfate dehydrogenase electron acceptor (217 aa).

An N-terminal signal peptide occupies residues 1–28; the sequence is MRQFIPMRRVLAVATLGALFWAAPASWA. 2 consecutive Cytochrome c domains span residues 29–104 and 116–206; these read AAPP…SKLK and AAAA…AAQP. 6 residues coordinate heme c: cysteine 37, cysteine 40, histidine 41, cysteine 137, cysteine 140, and histidine 141.

Binds 2 heme c groups covalently per subunit.

Its function is as follows. Acts as an electron acceptor for the thiosulfate dehydrogenase TsdA. The polypeptide is Thiosulfate dehydrogenase electron acceptor (tsdB) (Thiomonas intermedia (strain K12) (Thiobacillus intermedius)).